The following is an 84-amino-acid chain: Large ribosomal subunit protein bL27 (84 aa).

The protein belongs to the bacterial ribosomal protein bL27 family.

The chain is Large ribosomal subunit protein bL27 from Buchnera aphidicola subsp. Schizaphis graminum (strain Sg).